Here is a 739-residue protein sequence, read N- to C-terminus: Polyribonucleotide nucleotidyltransferase (739 aa).

Mg(2+) contacts are provided by aspartate 488 and aspartate 494. In terms of domain architecture, KH spans 555–614; it reads PKIVTLKINPDKIRDVIGPGGKVINGIIDETGVKIDIDQDGTVFIASTDQDGINHARQLI. Positions 624 to 692 constitute an S1 motif domain; the sequence is GEEFDGTVRR…DKGRVNASHK (69 aa). The disordered stretch occupies residues 698 to 739; it reads GMSPEDRAAYDEKKKTERDSRPPRRDTGSRPPRDGQRPPRRN. The segment covering 701–739 has biased composition (basic and acidic residues); the sequence is PEDRAAYDEKKKTERDSRPPRRDTGSRPPRDGQRPPRRN.

This sequence belongs to the polyribonucleotide nucleotidyltransferase family. The cofactor is Mg(2+).

Its subcellular location is the cytoplasm. It catalyses the reaction RNA(n+1) + phosphate = RNA(n) + a ribonucleoside 5'-diphosphate. Its function is as follows. Involved in mRNA degradation. Catalyzes the phosphorolysis of single-stranded polyribonucleotides processively in the 3'- to 5'-direction. This Exiguobacterium sibiricum (strain DSM 17290 / CCUG 55495 / CIP 109462 / JCM 13490 / 255-15) protein is Polyribonucleotide nucleotidyltransferase.